A 273-amino-acid polypeptide reads, in one-letter code: MMKRQFEDVTRIVIKIGTSSLVLPTGKINLEKIDQLAFVISSLMNKGKEVILVSSGAMGFGLDILKMEKRPTNLAKQQAVSSVGQVAMMSLYSQIFAHYQTNVSQILLTRDIVVFPESLANVTNAFESLISLGIVPIVNENDAVSVDEMDHATKFGDNDRLSAVVAGITKADLLIMLSDIDGLFDKSPTIYEDAQLRSHVAVITQEIIASAGGAGSKFGTGGMLSKVQSAQMVFENKGQMVLMNGANPRDILRVLEGQPLGTWFKQIEEVRHD.

Lys-15 is an ATP binding site. Positions 55, 142, and 158 each coordinate substrate. Residues 178–179 (SD) and 220–226 (TGGMLSK) each bind ATP.

It belongs to the glutamate 5-kinase family.

The protein localises to the cytoplasm. It carries out the reaction L-glutamate + ATP = L-glutamyl 5-phosphate + ADP. It participates in amino-acid biosynthesis; L-proline biosynthesis; L-glutamate 5-semialdehyde from L-glutamate: step 1/2. In terms of biological role, catalyzes the transfer of a phosphate group to glutamate to form L-glutamate 5-phosphate. The sequence is that of Glutamate 5-kinase from Streptococcus pyogenes serotype M2 (strain MGAS10270).